Here is a 510-residue protein sequence, read N- to C-terminus: Pre-glycoprotein polyprotein GP complex (510 aa).

Residue Gly-2 is the site of N-myristoyl glycine; by host attachment. Topologically, residues Gly-2–Met-17 are extracellular. A helical membrane pass occupies residues Ala-18–Thr-32. Lys-33 is a topological domain (cytoplasmic). Residues Gly-34 to Ala-53 traverse the membrane as a helical segment. Extracellular loops occupy residues Gly-54 to Asp-58 and Gly-59 to Asp-448. Cys-57 serves as a coordination point for Zn(2+). 10 N-linked (GlcNAc...) asparagine; by host glycosylation sites follow: Asn-75, Asn-90, Asn-101, Asn-112, Asn-117, Asn-122, Asn-133, Asn-182, Asn-218, and Asn-243. 4 disulfide bridges follow: Cys-87/Cys-250, Cys-295/Cys-308, Cys-317/Cys-326, and Cys-380/Cys-401. N-linked (GlcNAc...) asparagine; by host glycans are attached at residues Asn-381, Asn-389, Asn-406, and Asn-411. Residues Leu-449–Pro-469 traverse the membrane as a helical segment. The Cytoplasmic segment spans residues Thr-470 to Lys-510. Residues His-471, His-473, Cys-479, His-483, Cys-491, and Cys-493 each contribute to the Zn(2+) site.

Belongs to the arenaviridae GPC protein family. In terms of assembly, homotetramer; disulfide-linked. As to quaternary structure, homotetramer. GP2 homotetramers bind through ionic interactions with GP1 homotetramers to form the GP complex together with the stable signal peptide. The GP-C polyprotein interacts with the host protease MBTPS1/SKI-1 resulting in the polyprotein processing. In terms of processing, specific enzymatic cleavages in vivo yield mature proteins. GP-C polyprotein is cleaved in the endoplasmic reticulum by the host protease MBTPS1. Only cleaved glycoprotein is incorporated into virions. Post-translationally, the SSP remains stably associated with the GP complex following cleavage by signal peptidase and plays crucial roles in the trafficking of GP through the secretory pathway. Myristoylation is necessary for GP2-mediated fusion activity.

It is found in the virion membrane. The protein localises to the host endoplasmic reticulum membrane. The protein resides in the host Golgi apparatus membrane. Its subcellular location is the host cell membrane. Functionally, class I viral fusion protein that directs fusion of viral and host endosomal membranes, leading to delivery of the nucleocapsid into the cytoplasm. Membrane fusion is mediated by irreversible conformational changes induced upon acidification in the endosome. Its function is as follows. Stable signal peptide (SSP): cleaved and functions as a signal peptide. In addition, it is also retained as the third component of the GP complex. The SSP is required for efficient glycoprotein expression, post-translational maturation cleavage of GP1 and GP2, glycoprotein transport to the cell surface plasma membrane, formation of infectious virus particles, and acid pH-dependent glycoprotein-mediated cell fusion. In terms of biological role, interacts with the host receptor. The polypeptide is Pre-glycoprotein polyprotein GP complex (Pirital mammarenavirus (isolate Rat/Venezuela/VAV-488/1995) (PIRV)).